The sequence spans 429 residues: uncharacterized protein (429 aa).

Residues S116, D179, and H206 each act as charge relay system in the active site.

It belongs to the AB hydrolase 3 family.

It localises to the cytoplasm. The protein localises to the nucleus. This is an uncharacterized protein from Schizosaccharomyces pombe (strain 972 / ATCC 24843) (Fission yeast).